The following is a 327-amino-acid chain: DNA-directed RNA polymerase subunit alpha (327 aa).

The alpha N-terminal domain (alpha-NTD) stretch occupies residues 1-243; that stretch reads MEKFLKYEIK…EHLNPIVNVN (243 aa). Residues 260–327 form an alpha C-terminal domain (alpha-CTD) region; it reads RVRSFAKQIE…VHELGLKLRS (68 aa).

This sequence belongs to the RNA polymerase alpha chain family. As to quaternary structure, homodimer. The RNAP catalytic core consists of 2 alpha, 1 beta, 1 beta' and 1 omega subunit. When a sigma factor is associated with the core the holoenzyme is formed, which can initiate transcription.

The catalysed reaction is RNA(n) + a ribonucleoside 5'-triphosphate = RNA(n+1) + diphosphate. In terms of biological role, DNA-dependent RNA polymerase catalyzes the transcription of DNA into RNA using the four ribonucleoside triphosphates as substrates. This is DNA-directed RNA polymerase subunit alpha from Mycoplasma pneumoniae (strain ATCC 29342 / M129 / Subtype 1) (Mycoplasmoides pneumoniae).